The following is a 478-amino-acid chain: Proline--tRNA ligase (478 aa).

Belongs to the class-II aminoacyl-tRNA synthetase family. ProS type 3 subfamily. As to quaternary structure, homodimer.

Its subcellular location is the cytoplasm. It carries out the reaction tRNA(Pro) + L-proline + ATP = L-prolyl-tRNA(Pro) + AMP + diphosphate. Its function is as follows. Catalyzes the attachment of proline to tRNA(Pro) in a two-step reaction: proline is first activated by ATP to form Pro-AMP and then transferred to the acceptor end of tRNA(Pro). This is Proline--tRNA ligase from Ruminiclostridium cellulolyticum (strain ATCC 35319 / DSM 5812 / JCM 6584 / H10) (Clostridium cellulolyticum).